A 549-amino-acid chain; its full sequence is Thermosome subunit (549 aa).

Residues glutamate 528–glycine 538 show a composition bias toward basic and acidic residues. The interval glutamate 528 to aspartate 549 is disordered. Residues glutamate 540–aspartate 549 show a composition bias toward low complexity.

This sequence belongs to the TCP-1 chaperonin family. Forms an oligomeric complex of eight-membered rings.

Its function is as follows. Molecular chaperone; binds unfolded polypeptides in vitro, and has a weak ATPase activity. The chain is Thermosome subunit (ths) from Pyrococcus horikoshii (strain ATCC 700860 / DSM 12428 / JCM 9974 / NBRC 100139 / OT-3).